A 177-amino-acid chain; its full sequence is Large ribosomal subunit protein uL6 (177 aa).

Belongs to the universal ribosomal protein uL6 family. As to quaternary structure, part of the 50S ribosomal subunit.

In terms of biological role, this protein binds to the 23S rRNA, and is important in its secondary structure. It is located near the subunit interface in the base of the L7/L12 stalk, and near the tRNA binding site of the peptidyltransferase center. In Rickettsia prowazekii (strain Madrid E), this protein is Large ribosomal subunit protein uL6.